Here is a 537-residue protein sequence, read N- to C-terminus: Frizzled-4 (537 aa).

A signal peptide spans 1–36 (MAWRGAGPSVPGAPGGVGLSLGLLLQLLLLLGPARG). Residues 37–212 (FGDEEERRCD…KCGYDAGLYS (176 aa)) lie on the Extracellular side of the membrane. One can recognise an FZ domain in the interval 40–161 (EEERRCDPIR…NDHNHMCMEG (122 aa)). 8 cysteine pairs are disulfide-bonded: cysteine 45–cysteine 106, cysteine 53–cysteine 99, cysteine 90–cysteine 128, cysteine 117–cysteine 158, cysteine 121–cysteine 145, cysteine 181–cysteine 200, cysteine 204–cysteine 282, and cysteine 302–cysteine 377. The N-linked (GlcNAc...) asparagine glycan is linked to asparagine 59. Residue asparagine 144 is glycosylated (N-linked (GlcNAc...) asparagine). Residues 213–243 (RSAKEFTDIWMAVWASLCFISTAFTVLTFLI) traverse the membrane as a helical segment. Over 244-249 (DSSRFS) the chain is Cytoplasmic. The chain crosses the membrane as a helical span at residues 250–275 (YPERPIIFLSMCYNIYSIAYIVRLTV). The Extracellular segment spans residues 276–299 (GRERISCDFEEAAEPVLIQEGLKN). The chain crosses the membrane as a helical span at residues 300–333 (TGCAIIFLLMYFFGMASSIWWVILTLTWFLAAGL). At 334–336 (KWG) the chain is on the cytoplasmic side. A helical membrane pass occupies residues 337-365 (HEAIEMHSSYFHIAAWAIPAVKTIVILIM). The Extracellular segment spans residues 366-383 (RLVDADELTGLCYVGNQN). A helical transmembrane segment spans residues 384-418 (LDALTGFVVAPLFTYLVIGTLFIAAGLVALFKIRS). Residues 419–431 (NLQKDGTKTDKLE) lie on the Cytoplasmic side of the membrane. Residues 432-460 (RLMVKIGVFSVLYTVPATCVIACYFYEIS) traverse the membrane as a helical segment. At 461–473 (NWALFRYSADDSN) the chain is on the extracellular side. A helical transmembrane segment spans residues 474-495 (MAVEMLKIFMSLLVGITSGMWI). Over 496–537 (WSAKTLHTWQKCSNRLVNSGKVKREKRGNGWVKPGKGSETVV) the chain is Cytoplasmic. Positions 499-504 (KTLHTW) match the Lys-Thr-X-X-X-Trp motif, mediates interaction with the PDZ domain of Dvl family members motif. The PDZ-binding motif lies at 535 to 537 (TVV).

This sequence belongs to the G-protein coupled receptor Fz/Smo family. As to quaternary structure, interacts with MAGI3 and NDP. Component of a complex, at least composed of TSPAN12, FZD4 and norrin (NDP). Interacts (via FZ domain) with TSKU; TSKU competes with WNT2B for binding to FZD4, inhibiting Wnt signaling and repressing peripheral eye development. Interacts with glypican GPC3. Ubiquitinated by ZNRF3, leading to its degradation by the proteasome. As to expression, almost ubiquitous. Largely expressed in adult heart, skeletal muscle, ovary, and fetal kidney. Moderate amounts in adult liver, kidney, pancreas, spleen, and fetal lung, and small amounts in placenta, adult lung, prostate, testis, colon, fetal brain and liver.

It is found in the cell membrane. Its function is as follows. Receptor for Wnt proteins. Most frizzled receptors are coupled to the beta-catenin (CTNNB1) canonical signaling pathway, which leads to the activation of disheveled proteins, inhibition of GSK-3 kinase, nuclear accumulation of beta-catenin (CTNNB1) and activation of Wnt target genes. Plays a critical role in retinal vascularization by acting as a receptor for Wnt proteins and norrin (NDP). In retina, it can be activated by Wnt protein-binding and also by Wnt-independent signaling via binding of norrin (NDP), promoting in both cases beta-catenin (CTNNB1) accumulation and stimulation of LEF/TCF-mediated transcriptional programs. A second signaling pathway involving PKC and calcium fluxes has been seen for some family members, but it is not yet clear if it represents a distinct pathway or if it can be integrated in the canonical pathway, as PKC seems to be required for Wnt-mediated inactivation of GSK-3 kinase. Both pathways seem to involve interactions with G-proteins. May be involved in transduction and intercellular transmission of polarity information during tissue morphogenesis and/or in differentiated tissues. This chain is Frizzled-4 (FZD4), found in Homo sapiens (Human).